The sequence spans 100 residues: MQLTPHEQERLLIHVAADVAEKRRARGLRLNHPEAVALITSHLLEGARDGRTVAELMVSGRTLLTRDDVMEGIPEMLHDVQVEATFPDGTKLVTVHDPIV.

Belongs to the urease gamma subunit family. Heterotrimer of UreA (gamma), UreB (beta) and UreC (alpha) subunits. Three heterotrimers associate to form the active enzyme.

It localises to the cytoplasm. It catalyses the reaction urea + 2 H2O + H(+) = hydrogencarbonate + 2 NH4(+). The protein operates within nitrogen metabolism; urea degradation; CO(2) and NH(3) from urea (urease route): step 1/1. The polypeptide is Urease subunit gamma (Streptomyces griseus subsp. griseus (strain JCM 4626 / CBS 651.72 / NBRC 13350 / KCC S-0626 / ISP 5235)).